A 492-amino-acid polypeptide reads, in one-letter code: ATP synthase subunit beta, chloroplastic (492 aa).

170 to 177 (GGAGVGKT) contributes to the ATP binding site.

It belongs to the ATPase alpha/beta chains family. F-type ATPases have 2 components, CF(1) - the catalytic core - and CF(0) - the membrane proton channel. CF(1) has five subunits: alpha(3), beta(3), gamma(1), delta(1), epsilon(1). CF(0) has four main subunits: a(1), b(1), b'(1) and c(9-12).

It is found in the plastid. It localises to the chloroplast thylakoid membrane. It carries out the reaction ATP + H2O + 4 H(+)(in) = ADP + phosphate + 5 H(+)(out). Its function is as follows. Produces ATP from ADP in the presence of a proton gradient across the membrane. The catalytic sites are hosted primarily by the beta subunits. The polypeptide is ATP synthase subunit beta, chloroplastic (Psilotum nudum (Whisk fern)).